The sequence spans 252 residues: Segregation and condensation protein A (252 aa).

The interval 117–136 (EREEERQNAFTKPPSDLSEF) is disordered.

This sequence belongs to the ScpA family. Component of a cohesin-like complex composed of ScpA, ScpB and the Smc homodimer, in which ScpA and ScpB bind to the head domain of Smc. The presence of the three proteins is required for the association of the complex with DNA.

The protein localises to the cytoplasm. Its function is as follows. Participates in chromosomal partition during cell division. May act via the formation of a condensin-like complex containing Smc and ScpB that pull DNA away from mid-cell into both cell halves. The protein is Segregation and condensation protein A of Bacillus pumilus (strain SAFR-032).